Consider the following 252-residue polypeptide: MLIGSHVSPQDPLAAAQAEGAEVVQIFLGNPQSWKAPKPREDAAQLKAAALPIYVHAPYLINLASANNKVRIPSRKILQQTCDAAADIGAAAVIVHGGHVADDNDLDEGFQRWRKALDQLQTDVPVYLENTAGGEHAMARHFDTIARLWDVIGDTGIGFCLDTCHAWAAGEQLVHGVDRIKAVTGRIDLVHCNDSRDAAGSGRDRHANLGAGQIDPELLVAAVRAADAPIICETAEEGRKDDIAFLREKLNS.

9 residues coordinate Zn(2+): His56, His96, Glu129, Asp162, His165, His191, Asp204, His206, and Glu233.

The protein belongs to the AP endonuclease 2 family. Requires Zn(2+) as cofactor.

The catalysed reaction is Endonucleolytic cleavage to 5'-phosphooligonucleotide end-products.. Functionally, endonuclease IV plays a role in DNA repair. It cleaves phosphodiester bonds at apurinic or apyrimidinic (AP) sites, generating a 3'-hydroxyl group and a 5'-terminal sugar phosphate. In Mycobacterium marinum (strain ATCC BAA-535 / M), this protein is Probable endonuclease 4.